The chain runs to 448 residues: Exodeoxyribonuclease 7 large subunit (448 aa).

The protein belongs to the XseA family. In terms of assembly, heterooligomer composed of large and small subunits.

Its subcellular location is the cytoplasm. The enzyme catalyses Exonucleolytic cleavage in either 5'- to 3'- or 3'- to 5'-direction to yield nucleoside 5'-phosphates.. In terms of biological role, bidirectionally degrades single-stranded DNA into large acid-insoluble oligonucleotides, which are then degraded further into small acid-soluble oligonucleotides. The chain is Exodeoxyribonuclease 7 large subunit from Shewanella baltica (strain OS223).